The following is a 438-amino-acid chain: Glutamyl-tRNA reductase (438 aa).

Substrate is bound by residues 49 to 52 (TCNR), Ser109, 114 to 116 (EGQ), and Gln120. Catalysis depends on Cys50, which acts as the Nucleophile. 198–203 (GAGRMS) is a binding site for NADP(+).

The protein belongs to the glutamyl-tRNA reductase family. Homodimer.

It carries out the reaction (S)-4-amino-5-oxopentanoate + tRNA(Glu) + NADP(+) = L-glutamyl-tRNA(Glu) + NADPH + H(+). It functions in the pathway porphyrin-containing compound metabolism; protoporphyrin-IX biosynthesis; 5-aminolevulinate from L-glutamyl-tRNA(Glu): step 1/2. The protein operates within porphyrin-containing compound metabolism; chlorophyll biosynthesis. In terms of biological role, catalyzes the NADPH-dependent reduction of glutamyl-tRNA(Glu) to glutamate 1-semialdehyde (GSA). In Synechococcus sp. (strain WH7803), this protein is Glutamyl-tRNA reductase.